We begin with the raw amino-acid sequence, 56 residues long: Keratin-associated protein 20-1 (56 aa).

Belongs to the KRTAP type 20 family. In terms of assembly, interacts with hair keratins.

In the hair cortex, hair keratin intermediate filaments are embedded in an interfilamentous matrix, consisting of hair keratin-associated proteins (KRTAP), which are essential for the formation of a rigid and resistant hair shaft through their extensive disulfide bond cross-linking with abundant cysteine residues of hair keratins. The matrix proteins include the high-sulfur and high-glycine-tyrosine keratins. This chain is Keratin-associated protein 20-1 (KRTAP20-1), found in Homo sapiens (Human).